We begin with the raw amino-acid sequence, 592 residues long: MSNHAWILLGIFLVVLLLTVKPLGTYIANVMEGRFRLAGKIESPIYRLCGIRPDEEMGWLKYACAILLFNVLGVLAVYALQRLQAELPLNPQVFPAVSPDSAFNTAISFATNTNWQGYVGEATMSYLTQMLALAVQNFFSAATGIVVVIALIRGFARHTAKTFGNAWVDLTRITLHVLLPISIIYAVFLTGQGVIQNFNAYKDVTTLEVTSFDNPKLDDAGQPLKDDKGAVVTEPAQTQTQTLAMGPVASQEAIKMLGTNGGGFMNANSAHPYENPTPLSNFIQMLSIFLIPAALCFTFGRIVGDTRQGWAVLAAMTLMFVALAYTAMHFEQQANPLLTQLGVDPASGNMEGKETRFGIGDSGLFATITTLASCGAVNAMHDSFTPLGGLVPLIDMQLGEVVFGGVGTGLYGMLVFAIMAVFIAGLMIGRTPEYLGKKIEAFEMKMVSIAILVTPLLVLVGTAIAVMLADGKAGIANPGAHGFSEILYAFTSAANNNGSAFAGLSANTPFYNVMLGIAMWFGRFGVIVPVLAIAGSLAAKKRIAVGAGTLPTHGPLFVTLLIGTVLLVGLLNYVPALALGPVIEHLVLWAAH.

A run of 10 helical transmembrane segments spans residues 7 to 27 (ILLG…GTYI), 60 to 80 (LKYA…VYAL), 132 to 152 (ALAV…IALI), 175 to 195 (LHVL…QGVI), 279 to 299 (LSNF…CFTF), 310 to 330 (WAVL…AMHF), 409 to 429 (GLYG…LMIG), 449 to 469 (IAIL…VMLA), 513 to 533 (VMLG…VLAI), and 556 to 576 (LFVT…YVPA).

It belongs to the KdpA family. In terms of assembly, the system is composed of three essential subunits: KdpA, KdpB and KdpC.

It localises to the cell inner membrane. Part of the high-affinity ATP-driven potassium transport (or Kdp) system, which catalyzes the hydrolysis of ATP coupled with the electrogenic transport of potassium into the cytoplasm. This subunit binds the periplasmic potassium ions and delivers the ions to the membrane domain of KdpB through an intramembrane tunnel. The chain is Potassium-transporting ATPase potassium-binding subunit from Dechloromonas aromatica (strain RCB).